We begin with the raw amino-acid sequence, 213 residues long: FMN-dependent NADH:quinone oxidoreductase 1 (213 aa).

18-20 (SVS) serves as a coordination point for FMN.

Belongs to the azoreductase type 1 family. Homodimer. The cofactor is FMN.

The enzyme catalyses 2 a quinone + NADH + H(+) = 2 a 1,4-benzosemiquinone + NAD(+). It catalyses the reaction N,N-dimethyl-1,4-phenylenediamine + anthranilate + 2 NAD(+) = 2-(4-dimethylaminophenyl)diazenylbenzoate + 2 NADH + 2 H(+). Quinone reductase that provides resistance to thiol-specific stress caused by electrophilic quinones. Functionally, also exhibits azoreductase activity. Catalyzes the reductive cleavage of the azo bond in aromatic azo compounds to the corresponding amines. In Bacillus cereus (strain ZK / E33L), this protein is FMN-dependent NADH:quinone oxidoreductase 1.